The chain runs to 88 residues: Putative defensin-like protein 256 (88 aa).

A signal peptide spans methionine 1 to alanine 25. Disulfide bonds link cysteine 30-cysteine 46, cysteine 36-cysteine 53, and cysteine 40-cysteine 55.

It belongs to the DEFL family.

It is found in the secreted. The sequence is that of Putative defensin-like protein 256 from Arabidopsis thaliana (Mouse-ear cress).